The following is a 546-amino-acid chain: Glucose-6-phosphate isomerase (546 aa).

Glutamate 353 (proton donor) is an active-site residue. Residues histidine 384 and lysine 512 contribute to the active site.

The protein belongs to the GPI family.

The protein resides in the cytoplasm. It catalyses the reaction alpha-D-glucose 6-phosphate = beta-D-fructose 6-phosphate. Its pathway is carbohydrate biosynthesis; gluconeogenesis. The protein operates within carbohydrate degradation; glycolysis; D-glyceraldehyde 3-phosphate and glycerone phosphate from D-glucose: step 2/4. Functionally, catalyzes the reversible isomerization of glucose-6-phosphate to fructose-6-phosphate. The sequence is that of Glucose-6-phosphate isomerase from Actinobacillus pleuropneumoniae serotype 5b (strain L20).